A 445-amino-acid polypeptide reads, in one-letter code: Histidinol dehydrogenase (445 aa).

Y138, Q199, and N222 together coordinate NAD(+). Positions 245, 267, and 270 each coordinate substrate. Zn(2+) contacts are provided by Q267 and H270. Catalysis depends on proton acceptor residues E335 and H336. Positions 336, 369, 423, and 428 each coordinate substrate. D369 contributes to the Zn(2+) binding site. H428 serves as a coordination point for Zn(2+).

This sequence belongs to the histidinol dehydrogenase family. It depends on Zn(2+) as a cofactor.

The catalysed reaction is L-histidinol + 2 NAD(+) + H2O = L-histidine + 2 NADH + 3 H(+). Its pathway is amino-acid biosynthesis; L-histidine biosynthesis; L-histidine from 5-phospho-alpha-D-ribose 1-diphosphate: step 9/9. In terms of biological role, catalyzes the sequential NAD-dependent oxidations of L-histidinol to L-histidinaldehyde and then to L-histidine. The sequence is that of Histidinol dehydrogenase from Burkholderia mallei (strain ATCC 23344).